The chain runs to 277 residues: Co-chaperone protein DjlA (277 aa).

Topologically, residues 1–6 (MRYWGK) are periplasmic. A helical membrane pass occupies residues 7–31 (LLGLVLGVMYAPGVVGALLGLLVGH). The Cytoplasmic segment spans residues 32-277 (MVDRALGAKR…DLIKREKGFK (246 aa)). The 67-residue stretch at 211–277 (DACKVLGVNS…DLIKREKGFK (67 aa)) folds into the J domain.

As to quaternary structure, homodimer.

It is found in the cell inner membrane. Its function is as follows. Regulatory DnaK co-chaperone. Direct interaction between DnaK and DjlA is needed for the induction of the wcaABCDE operon, involved in the synthesis of a colanic acid polysaccharide capsule, possibly through activation of the RcsB/RcsC phosphotransfer signaling pathway. The colanic acid capsule may help the bacterium survive conditions outside the host. The chain is Co-chaperone protein DjlA from Yersinia pseudotuberculosis serotype I (strain IP32953).